Reading from the N-terminus, the 264-residue chain is DNA-directed RNA polymerase subunit Rpo3 (264 aa).

The [3Fe-4S] cluster site is built by C203, C206, and C209.

This sequence belongs to the archaeal Rpo3/eukaryotic RPB3 RNA polymerase subunit family. Part of the RNA polymerase complex. [3Fe-4S] cluster serves as cofactor.

It localises to the cytoplasm. The enzyme catalyses RNA(n) + a ribonucleoside 5'-triphosphate = RNA(n+1) + diphosphate. Its function is as follows. DNA-dependent RNA polymerase (RNAP) catalyzes the transcription of DNA into RNA using the four ribonucleoside triphosphates as substrates. In Archaeoglobus fulgidus (strain ATCC 49558 / DSM 4304 / JCM 9628 / NBRC 100126 / VC-16), this protein is DNA-directed RNA polymerase subunit Rpo3.